An 830-amino-acid chain; its full sequence is Nucleolar complex-associated protein 3 (830 aa).

Disordered regions lie at residues 1-22 (MGKN…DVAE), 67-86 (KYEE…GNGE), 112-169 (KSKL…EETP), 391-436 (GKPN…KIRD), and 802-830 (LQSE…KKQI). Coiled-coil stretches lie at residues 61–81 (VMTV…LQEE) and 111–156 (KKSK…HEKD). The span at 67 to 84 (KYEEERSKRKTLQEEKGN) shows a compositional bias: basic and acidic residues. The span at 118 to 129 (AETDEAEKDVLE) shows a compositional bias: acidic residues. The span at 130–140 (DEHVLNKSQRR) shows a compositional bias: basic and acidic residues. A Nuclear localization signal 1 motif is present at residues 138 to 145 (QRREKAKK). The span at 141 to 150 (EKAKKSKREA) shows a compositional bias: basic residues. The span at 159 to 168 (DEILQEEEET) shows a compositional bias: acidic residues. The span at 391–400 (GKPNKEDEHN) shows a compositional bias: basic and acidic residues. A coiled-coil region spans residues 400–429 (NKKYKKNNKRKTQEEQNQVQENERKKSKKD). A Nuclear localization signal 2 motif is present at residues 408-415 (KRKTQEEQ). Residues 420-436 (ENERKKSKKDMMSKIRD) are compositionally biased toward basic and acidic residues. Positions 806–813 (EKKPLKKQ) match the Nuclear localization signal 3 motif. Residues 817–830 (VKKKLKNPKSKKQI) show a composition bias toward basic residues.

This sequence belongs to the CBF/MAK21 family. As to quaternary structure, component of nucleolar complexes. Interacts with RBL and NOC2 in both the nucleolus and nucleoplasm.

Its subcellular location is the nucleus. It is found in the nucleolus. The protein localises to the nucleoplasm. In terms of biological role, may be required for synthesis of 60S ribosomal subunits and the transport of pre-ribosomes from the nucleoplasm to the cytoplasm. Also required for initiation of DNA replication. This Arabidopsis thaliana (Mouse-ear cress) protein is Nucleolar complex-associated protein 3.